A 1642-amino-acid polypeptide reads, in one-letter code: Cholesterol transporter ABCA5 (1642 aa).

A helical membrane pass occupies residues Ser-32–Met-52. Asn-86 and Asn-190 each carry an N-linked (GlcNAc...) asparagine glycan. Helical transmembrane passes span Val-220–Ile-240, Leu-264–Ile-284, Ile-297–Leu-317, Val-327–Leu-347, Leu-355–Met-375, and Leu-396–Tyr-416. N-linked (GlcNAc...) asparagine glycosylation occurs at Asn-458. Residues Ile-478 to Tyr-713 enclose the ABC transporter 1 domain. Residue Gly-514–Ser-521 participates in ATP binding. Residues Leu-866 to Phe-886 form a helical membrane-spanning segment. Asn-919 carries N-linked (GlcNAc...) asparagine glycosylation. A helical transmembrane segment spans residues Val-967 to Ile-987. A glycan (N-linked (GlcNAc...) asparagine) is linked at Asn-996. Helical transmembrane passes span Leu-1021–Met-1041, Val-1071–Phe-1091, Phe-1102–Ile-1122, Phe-1139–Gly-1159, Ala-1164–Ile-1184, and Leu-1207–His-1227. The ABC transporter 2 domain maps to Ile-1290–Lys-1533. Gly-1333–Ser-1340 contacts ATP.

The protein belongs to the ABC transporter superfamily. ABCA family. N-glycosylated. Expressed in testis, epididymis, lung and brain.

Its subcellular location is the lysosome membrane. The protein resides in the late endosome membrane. The protein localises to the golgi apparatus membrane. It localises to the cell membrane. The enzyme catalyses cholesterol(in) + ATP + H2O = cholesterol(out) + ADP + phosphate + H(+). In terms of biological role, cholesterol efflux transporter in macrophages that is responsible for APOAI/high-density lipoproteins (HDL) formation at the plasma membrane under high cholesterol levels and participates in reverse cholesterol transport. May play a role in the processing of autolysosomes. The chain is Cholesterol transporter ABCA5 from Rattus norvegicus (Rat).